The primary structure comprises 194 residues: MTENSTSAPAAKPKRAKASKKSTDHPKYSDMIVAAIQAEKNRAGSSRQSIQKYIKSHYKVGENADSQIKLSIKRLVTTGVLKQTKGVGASGSFRLAKSDEPKKSVAFKKTKKEIKKVATPKKASKPKKAASKAPTKKPKATPVKKAKKKLAATPKKAKKPKTVKAKPVKASKPKKAKPVKPKAKSSAKRAGKKK.

Methionine 1 carries the N-acetylmethionine modification. Residues 1–11 show a composition bias toward low complexity; that stretch reads MTENSTSAPAA. The disordered stretch occupies residues 1 to 29; the sequence is MTENSTSAPAAKPKRAKASKKSTDHPKYS. Threonine 2 is modified (N-acetylthreonine; partial; in Histone H1.0, N-terminally processed). Asparagine 4 is subject to Deamidated asparagine; partial. The H15 domain maps to 24–97; sequence DHPKYSDMIV…GASGSFRLAK (74 aa). A Citrulline modification is found at arginine 42. The disordered stretch occupies residues 84 to 194; it reads TKGVGASGSF…SSAKRAGKKK (111 aa). ADP-ribosylserine is present on serine 104. A compositionally biased stretch (basic residues) spans 105–194; that stretch reads VAFKKTKKEI…SSAKRAGKKK (90 aa).

The protein belongs to the histone H1/H5 family. In terms of processing, phosphorylated on Ser-17 in RNA edited version. ADP-ribosylated on Ser-104 in response to DNA damage.

Its subcellular location is the nucleus. The protein localises to the chromosome. Its function is as follows. Histones H1 are necessary for the condensation of nucleosome chains into higher-order structures. The histones H1.0 are found in cells that are in terminal stages of differentiation or that have low rates of cell division. This Homo sapiens (Human) protein is Histone H1.0.